The sequence spans 411 residues: Citrate synthase (411 aa).

Residues His304 and Asp363 contribute to the active site.

Belongs to the citrate synthase family.

It carries out the reaction oxaloacetate + acetyl-CoA + H2O = citrate + CoA + H(+). It participates in carbohydrate metabolism; tricarboxylic acid cycle; isocitrate from oxaloacetate: step 1/2. This Rickettsia akari protein is Citrate synthase (gltA).